The chain runs to 115 residues: Large ribosomal subunit protein bL19 (115 aa).

Belongs to the bacterial ribosomal protein bL19 family.

Its function is as follows. This protein is located at the 30S-50S ribosomal subunit interface and may play a role in the structure and function of the aminoacyl-tRNA binding site. The polypeptide is Large ribosomal subunit protein bL19 (Clostridium tetani (strain Massachusetts / E88)).